Reading from the N-terminus, the 584-residue chain is uncharacterized protein (584 aa).

The span at 353–375 shows a compositional bias: polar residues; it reads NSEGQTNAETSLNGKGTVGNQWA. Disordered stretches follow at residues 353–379, 400–426, and 463–565; these read NSEGQTNAETSLNGKGTVGNQWASPPE, LESKFNGTGGGQTDSEKEQIMESVSSH, and SVDS…CNSG. Over residues 502–511 the composition is skewed to polar residues; the sequence is KANSPASSRL. Over residues 516 to 535 the composition is skewed to basic and acidic residues; it reads DSSHLSKHVNFDKNPDHSEA.

This is an uncharacterized protein from Mus musculus (Mouse).